We begin with the raw amino-acid sequence, 225 residues long: Uracil-DNA glycosylase (225 aa).

D65 functions as the Proton acceptor in the catalytic mechanism.

Belongs to the uracil-DNA glycosylase (UDG) superfamily. UNG family.

It localises to the cytoplasm. The catalysed reaction is Hydrolyzes single-stranded DNA or mismatched double-stranded DNA and polynucleotides, releasing free uracil.. Functionally, excises uracil residues from the DNA which can arise as a result of misincorporation of dUMP residues by DNA polymerase or due to deamination of cytosine. The polypeptide is Uracil-DNA glycosylase (Bacillus mycoides (strain KBAB4) (Bacillus weihenstephanensis)).